The primary structure comprises 130 residues: Small ribosomal subunit protein uS9 (130 aa).

Basic and acidic residues predominate over residues 105–115 (TRDSRQVERKK). Residues 105-130 (TRDSRQVERKKVGFRKSRKRTQFSKR) are disordered. A compositionally biased stretch (basic residues) spans 116-130 (VGFRKSRKRTQFSKR).

It belongs to the universal ribosomal protein uS9 family.

The protein is Small ribosomal subunit protein uS9 of Buchnera aphidicola subsp. Schizaphis graminum (strain Sg).